The chain runs to 306 residues: D-glucosamine-6-phosphate 4-epimerase (306 aa).

The region spanning 19-153 is the SIS domain; that stretch reads DIPGVKTAEK…TGSNYRVQDL (135 aa). Glutamate 200 (proton acceptor) is an active-site residue. Histidine 216 acts as the Proton donor in catalysis. Arginine 296 serves as the catalytic Proton acceptor.

Belongs to the PGI/PMI family.

The enzyme catalyses D-glucosamine 6-phosphate = D-galactosamine 6-phosphate. In terms of biological role, involved in the synthesis of UDP-N-acetylgalactosamine (UDP-GalNAc). Catalyzes the conversion of glucosamine-6-phosphate (GlcN-6-P) to galactosamine-6-phosphate (GalN-6-P). This is D-glucosamine-6-phosphate 4-epimerase from Sulfolobus acidocaldarius (strain ATCC 33909 / DSM 639 / JCM 8929 / NBRC 15157 / NCIMB 11770).